A 412-amino-acid chain; its full sequence is ORC1-type DNA replication protein 2 (412 aa).

Residues 61–65 (VGKTA), Y207, and R219 each bind ATP.

It belongs to the CDC6/cdc18 family.

Involved in regulation of DNA replication. The sequence is that of ORC1-type DNA replication protein 2 (cdc6b) from Haloarcula marismortui (strain ATCC 43049 / DSM 3752 / JCM 8966 / VKM B-1809) (Halobacterium marismortui).